The chain runs to 509 residues: 2-isopropylmalate synthase (509 aa).

The 263-residue stretch at Ile5–Lys267 folds into the Pyruvate carboxyltransferase domain. Mn(2+)-binding residues include Asp14, His202, His204, and Asn238. A regulatory domain region spans residues Lys391–Asn509.

The protein belongs to the alpha-IPM synthase/homocitrate synthase family. LeuA type 1 subfamily. As to quaternary structure, homodimer. Mn(2+) serves as cofactor.

The protein resides in the cytoplasm. It carries out the reaction 3-methyl-2-oxobutanoate + acetyl-CoA + H2O = (2S)-2-isopropylmalate + CoA + H(+). Its pathway is amino-acid biosynthesis; L-leucine biosynthesis; L-leucine from 3-methyl-2-oxobutanoate: step 1/4. Its function is as follows. Catalyzes the condensation of the acetyl group of acetyl-CoA with 3-methyl-2-oxobutanoate (2-ketoisovalerate) to form 3-carboxy-3-hydroxy-4-methylpentanoate (2-isopropylmalate). In Staphylococcus aureus (strain USA300), this protein is 2-isopropylmalate synthase.